The following is a 552-amino-acid chain: Scavenger receptor class B member 1 (552 aa).

Over M1–A11 the chain is Cytoplasmic. A helical transmembrane segment spans residues G12 to V32. Residues P33–Y443 are Extracellular-facing. N-linked (GlcNAc...) asparagine glycosylation is found at N102, N108, N173, N212, N227, N255, N310, N330, and N383. C251 and C384 are oxidised to a cystine. 2 positions are modified to phosphoserine: Y393 and V458. The helical transmembrane segment at A444 to I464 threads the bilayer. C462 is lipidated: S-palmitoyl cysteine. Residues R465–S552 are Cytoplasmic-facing. Position 493 is a phosphoserine (T493).

The protein belongs to the CD36 family. The C-terminal region binds to PDZK1. As to quaternary structure, (Microbial infection) Interacts with hepatitis C virus E1:E2 glycoproteins. In terms of processing, N-glycosylated. Post-translationally, the six cysteines of the extracellular domain are all involved in intramolecular disulfide bonds. As to expression, widely expressed.

Its subcellular location is the cell membrane. It is found in the membrane. The protein localises to the caveola. In terms of biological role, receptor for different ligands such as phospholipids, cholesterol ester, lipoproteins, phosphatidylserine and apoptotic cells. Receptor for HDL, mediating selective uptake of cholesteryl ether and HDL-dependent cholesterol efflux. Also facilitates the flux of free and esterified cholesterol between the cell surface and apoB-containing lipoproteins and modified lipoproteins, although less efficiently than HDL. May be involved in the phagocytosis of apoptotic cells, via its phosphatidylserine binding activity. (Microbial infection) Acts as a receptor for hepatitis C virus in hepatocytes and appears to facilitate its cell entry. Binding between SCARB1 and the hepatitis C virus glycoprotein E2 is independent of the genotype of the viral isolate. Functionally, (Microbial infection) Mediates uptake of M.fortuitum, E.coli and S.aureus. Its function is as follows. (Microbial infection) Facilitates the entry of human coronavirus SARS-CoV-2 by acting as an entry cofactor through HDL binding. The chain is Scavenger receptor class B member 1 (SCARB1) from Homo sapiens (Human).